A 381-amino-acid polypeptide reads, in one-letter code: Cytochrome b (381 aa).

4 helical membrane-spanning segments follow: residues 34–54 (FGSL…FLAM), 78–99 (WLIR…YIHI), 114–134 (WNIG…GYVL), and 179–199 (FFAF…IHVL). Heme b-binding residues include H84 and H98. Positions 183 and 197 each coordinate heme b. H202 lines the a ubiquinone pocket. The next 4 membrane-spanning stretches (helical) occupy residues 227-247 (YKDA…ALFL), 289-309 (LGGV…PLLH), 321-341 (LTQV…WIGG), and 348-368 (FILI…IAMP).

The protein belongs to the cytochrome b family. The cytochrome bc1 complex contains 3 respiratory subunits (MT-CYB, CYC1 and UQCRFS1), 2 core proteins (UQCRC1 and UQCRC2) and probably 6 low-molecular weight proteins. It depends on heme b as a cofactor.

The protein resides in the mitochondrion inner membrane. Functionally, component of the ubiquinol-cytochrome c reductase complex (complex III or cytochrome b-c1 complex) that is part of the mitochondrial respiratory chain. The b-c1 complex mediates electron transfer from ubiquinol to cytochrome c. Contributes to the generation of a proton gradient across the mitochondrial membrane that is then used for ATP synthesis. The chain is Cytochrome b (mt-cyb) from Isurus paucus (Longfin mako shark).